A 106-amino-acid polypeptide reads, in one-letter code: Large ribosomal subunit protein bL21 (106 aa).

This sequence belongs to the bacterial ribosomal protein bL21 family. Part of the 50S ribosomal subunit. Contacts protein L20.

In terms of biological role, this protein binds to 23S rRNA in the presence of protein L20. This chain is Large ribosomal subunit protein bL21, found in Chlamydia pneumoniae (Chlamydophila pneumoniae).